The primary structure comprises 321 residues: Auxin-responsive protein IAA8 (321 aa).

Residues 54–58 carry the EAR-like (transcriptional repression) motif; that stretch reads LRLGL. The region spanning 199 to 301 is the PB1 domain; that stretch reads VLFVKVSMDG…TCQKLKIMKG (103 aa).

It belongs to the Aux/IAA family. In terms of assembly, homodimers and heterodimers. Interacts with TPL. In terms of tissue distribution, highly expressed in the whole plant.

It is found in the nucleus. Functionally, aux/IAA proteins are short-lived transcriptional factors that function as repressors of early auxin response genes at low auxin concentrations. Repression is thought to result from the interaction with auxin response factors (ARFs), proteins that bind to the auxin-responsive promoter element (AuxRE). Formation of heterodimers with ARF proteins may alter their ability to modulate early auxin response genes expression. In Arabidopsis thaliana (Mouse-ear cress), this protein is Auxin-responsive protein IAA8 (IAA8).